The primary structure comprises 207 residues: MREAIIKRAAKELKEGMYVNLGIGLPTLVANEVSGMNIVFQSENGLLGIGAYPLEGSVDADLINAGKETITVVPGASFFNSADSFAMIRGGHIDLAILGGMEVSQNGDLANWMIPKKLIKGMGGAMDLVHGAKKVIVIMEHCNKYGESKVKKECSLPLTGKGVVHQLITDLAVFEFSNNAMKLVELQEGVSLDQVKEKTEAEFEVRL.

The active site involves glutamate 43.

Belongs to the 3-oxoacid CoA-transferase subunit B family. Heterodimer of a subunit A and a subunit B.

The enzyme catalyses a 3-oxo acid + succinyl-CoA = a 3-oxoacyl-CoA + succinate. The polypeptide is Succinyl-CoA:3-ketoacid coenzyme A transferase subunit B (scoB) (Helicobacter pylori (strain ATCC 700392 / 26695) (Campylobacter pylori)).